Consider the following 344-residue polypeptide: Dihydroorotase (344 aa).

The Zn(2+) site is built by His-13 and His-15. Substrate contacts are provided by residues 15 to 17 (HLR) and Asn-41. Zn(2+) is bound by residues Lys-99, His-136, and His-174. At Lys-99 the chain carries N6-carboxylysine. His-136 lines the substrate pocket. Leu-219 is a substrate binding site. Asp-247 is a binding site for Zn(2+). The active site involves Asp-247. Positions 251 and 263 each coordinate substrate.

It belongs to the metallo-dependent hydrolases superfamily. DHOase family. Class II DHOase subfamily. As to quaternary structure, homodimer. It depends on Zn(2+) as a cofactor.

The catalysed reaction is (S)-dihydroorotate + H2O = N-carbamoyl-L-aspartate + H(+). It participates in pyrimidine metabolism; UMP biosynthesis via de novo pathway; (S)-dihydroorotate from bicarbonate: step 3/3. Catalyzes the reversible cyclization of carbamoyl aspartate to dihydroorotate. This is Dihydroorotase from Acinetobacter baumannii (strain AB307-0294).